Here is a 317-residue protein sequence, read N- to C-terminus: Cytochrome f (317 aa).

The N-terminal stretch at Met1–Ala34 is a signal peptide. Tyr35, Cys55, Cys58, and His59 together coordinate heme. Residues Ile284–Lys304 traverse the membrane as a helical segment.

It belongs to the cytochrome f family. As to quaternary structure, the 4 large subunits of the cytochrome b6-f complex are cytochrome b6, subunit IV (17 kDa polypeptide, PetD), cytochrome f and the Rieske protein, while the 4 small subunits are PetG, PetL, PetM and PetN. The complex functions as a dimer. Requires heme as cofactor.

The protein localises to the cellular thylakoid membrane. Component of the cytochrome b6-f complex, which mediates electron transfer between photosystem II (PSII) and photosystem I (PSI), cyclic electron flow around PSI, and state transitions. The protein is Cytochrome f of Prochlorococcus marinus (strain MIT 9515).